The primary structure comprises 429 residues: Queuine tRNA-ribosyltransferase accessory subunit 2 (429 aa).

Cysteine 330, cysteine 332, cysteine 335, and histidine 361 together coordinate Zn(2+).

The protein belongs to the queuine tRNA-ribosyltransferase family. QTRT2 subfamily. As to quaternary structure, heterodimer of a catalytic subunit and an accessory subunit. Requires Zn(2+) as cofactor.

The protein localises to the cytoplasm. Its function is as follows. Non-catalytic subunit of the queuine tRNA-ribosyltransferase (TGT) that catalyzes the base-exchange of a guanine (G) residue with queuine (Q) at position 34 (anticodon wobble position) in tRNAs with GU(N) anticodons (tRNA-Asp, -Asn, -His and -Tyr), resulting in the hypermodified nucleoside queuosine (7-(((4,5-cis-dihydroxy-2-cyclopenten-1-yl)amino)methyl)-7-deazaguanosine). The polypeptide is Queuine tRNA-ribosyltransferase accessory subunit 2 (Culex quinquefasciatus (Southern house mosquito)).